The following is a 145-amino-acid chain: Transcription antitermination protein NusB (145 aa).

The protein belongs to the NusB family.

Its function is as follows. Involved in transcription antitermination. Required for transcription of ribosomal RNA (rRNA) genes. Binds specifically to the boxA antiterminator sequence of the ribosomal RNA (rrn) operons. This is Transcription antitermination protein NusB from Burkholderia cenocepacia (strain HI2424).